Here is a 121-residue protein sequence, read N- to C-terminus: Large ribosomal subunit protein eL31 (121 aa).

This sequence belongs to the eukaryotic ribosomal protein eL31 family.

In Perilla frutescens (Beefsteak mint), this protein is Large ribosomal subunit protein eL31 (RPL31).